The chain runs to 179 residues: Large ribosomal subunit protein uL5 (179 aa).

This sequence belongs to the universal ribosomal protein uL5 family. As to quaternary structure, part of the 50S ribosomal subunit; part of the 5S rRNA/L5/L18/L25 subcomplex. Contacts the 5S rRNA and the P site tRNA. Forms a bridge to the 30S subunit in the 70S ribosome.

Functionally, this is one of the proteins that bind and probably mediate the attachment of the 5S RNA into the large ribosomal subunit, where it forms part of the central protuberance. In the 70S ribosome it contacts protein S13 of the 30S subunit (bridge B1b), connecting the 2 subunits; this bridge is implicated in subunit movement. Contacts the P site tRNA; the 5S rRNA and some of its associated proteins might help stabilize positioning of ribosome-bound tRNAs. The chain is Large ribosomal subunit protein uL5 from Dictyoglomus thermophilum (strain ATCC 35947 / DSM 3960 / H-6-12).